The primary structure comprises 1404 residues: Microtubule organization protein AKNA (1404 aa).

Disordered stretches follow at residues 1–304 and 317–382; these read MASS…VSPL and QHKQ…RPLI. A Phosphoserine modification is found at Ser-51. Acidic residues predominate over residues 70–91; the sequence is WDPDMQDSEESSGEETEADDAS. Polar residues predominate over residues 185–203; it reads KSWSSGTVSLRQPSDSLGS. Ser-302 bears the Phosphoserine mark. 2 positions are modified to phosphoserine: Ser-485 and Ser-520. Residues 494-549 are disordered; sequence AEWWPDPAQDPQASEATGWPFPRTDLSPSSSPGVATPGRLPQSQGIATDQPSTGQT. A compositionally biased stretch (polar residues) spans 534–549; that stretch reads PQSQGIATDQPSTGQT. A Phosphoserine modification is found at Ser-617. Basic and acidic residues predominate over residues 645–659; that stretch reads MDQTQRETEPCRPDL. Positions 645–708 are disordered; that stretch reads MDQTQRETEP…TSPGSSCTLP (64 aa). 2 stretches are compositionally biased toward polar residues: residues 660–674 and 686–707; these read QDST…QSAH and DGQT…SCTL. Phosphoserine is present on residues Ser-750 and Ser-753. The segment at 754–787 is PEST; that stretch reads LPEALRDEDEDDLEEEEEEQDHQGPLEVDSPATA. Disordered stretches follow at residues 755–1038 and 1085–1185; these read PEAL…STAN and HSTQ…RERV. Positions 759–773 are enriched in acidic residues; the sequence is RDEDEDDLEEEEEEQ. Residues 803–813 show a composition bias toward basic and acidic residues; the sequence is TQAEESHRDAT. 2 positions are modified to phosphoserine: Ser-831 and Ser-860. The interval 885-906 is PEST; that stretch reads HTEEPWMVSPETDSGFVGSETS. 3 stretches are compositionally biased toward polar residues: residues 903 to 914, 921 to 933, and 963 to 974; these read SETSIVSPFTQT, HVST…QHLT, and SRTQQHFSSLSS. A Phosphoserine modification is found at Ser-971. A compositionally biased stretch (low complexity) spans 1015–1029; sequence TSPDSAPAPTAASTP. The span at 1085-1098 shows a compositional bias: polar residues; sequence HSTQTQEKLGSSPS. Residues 1088-1096 constitute a DNA-binding region (a.T hook); that stretch reads QTQEKLGSS. Phosphoserine is present on residues Ser-1144 and Ser-1145. Over residues 1155–1167 the composition is skewed to basic and acidic residues; that stretch reads SSEKSRTFEEHPE. A Phosphoserine modification is found at Ser-1200. Disordered regions lie at residues 1208 to 1235 and 1253 to 1286; these read SGTP…TTRG and SAEA…QTGS. Over residues 1221–1235 the composition is skewed to polar residues; that stretch reads TQDTGSAVSRDTTRG. 3 positions are modified to phosphoserine: Ser-1339, Ser-1352, and Ser-1389.

It belongs to the AKNA family. Interacts with DCTN1. Interacts with MAPRE1/EB1. Interacts with ODF2. Interacts with CAMSAP3. Phosphorylated; phosphorylation regulates dissociation from and reassembly at the centrosome. In terms of tissue distribution, expressed in neural stem cells isolated at the peak of subventricular zone (SVZ): localizes at the subdistal appendages of the mother centriole in specific subtypes of neural stem cells and in almost all basal progenitors.

It localises to the cytoplasm. The protein resides in the cytoskeleton. The protein localises to the microtubule organizing center. Its subcellular location is the centrosome. It is found in the centriole. It localises to the nucleus. In terms of biological role, centrosomal protein that plays a key role in cell delamination by regulating microtubule organization. Required for the delamination and retention of neural stem cells from the subventricular zone during neurogenesis. Also regulates the epithelial-to-mesenchymal transition in other epithelial cells. Acts by increasing centrosomal microtubule nucleation and recruiting nucleation factors and minus-end stabilizers, thereby destabilizing microtubules at the adherens junctions and mediating constriction of the apical endfoot. In addition, may also act as a transcription factor that specifically activates the expression of the CD40 receptor and its ligand CD40L/CD154, two cell surface molecules on lymphocytes that are critical for antigen-dependent-B-cell development. Binds to A/T-rich promoters. It is unclear how it can both act as a microtubule organizer and as a transcription factor; additional evidences are required to reconcile these two apparently contradictory functions. The sequence is that of Microtubule organization protein AKNA from Mus musculus (Mouse).